A 520-amino-acid chain; its full sequence is GMP synthase [glutamine-hydrolyzing] (520 aa).

One can recognise a Glutamine amidotransferase type-1 domain in the interval 13-205 (KIIVLDYGSQ…ALNICKAKGD (193 aa)). Cys90 acts as the Nucleophile in catalysis. Residues His179 and Glu181 contribute to the active site. Residues 206-395 (WSMDNFIDMQ…LGMPDHIVWR (190 aa)) form the GMPS ATP-PPase domain. 233–239 (SGGVDSS) serves as a coordination point for ATP.

In terms of assembly, homodimer.

The catalysed reaction is XMP + L-glutamine + ATP + H2O = GMP + L-glutamate + AMP + diphosphate + 2 H(+). Its pathway is purine metabolism; GMP biosynthesis; GMP from XMP (L-Gln route): step 1/1. Functionally, catalyzes the synthesis of GMP from XMP. In Streptococcus pneumoniae (strain CGSP14), this protein is GMP synthase [glutamine-hydrolyzing].